Here is a 403-residue protein sequence, read N- to C-terminus: G-protein coupled receptor family C group 5 member B (403 aa).

The N-terminal stretch at methionine 1–serine 28 is a signal peptide. Over glutamate 29–glycine 56 the chain is Extracellular. Asparagine 30 carries N-linked (GlcNAc...) asparagine glycosylation. The helical transmembrane segment at isoleucine 57 to leucine 77 threads the bilayer. The Cytoplasmic portion of the chain corresponds to leucine 78–glycine 94. Residues leucine 95 to isoleucine 115 traverse the membrane as a helical segment. The Extracellular portion of the chain corresponds to glutamine 116–arginine 126. The chain crosses the membrane as a helical span at residues phenylalanine 127–valine 147. Residues arginine 148–leucine 162 are Cytoplasmic-facing. The chain crosses the membrane as a helical span at residues valine 163 to leucine 183. The Extracellular portion of the chain corresponds to threonine 184–aspartate 199. Residues phenylalanine 200 to phenylalanine 220 traverse the membrane as a helical segment. Topologically, residues threonine 221 to alanine 234 are cytoplasmic. The helical transmembrane segment at phenylalanine 235–leucine 255 threads the bilayer. Residues phenylalanine 256–threonine 271 lie on the Extracellular side of the membrane. A helical transmembrane segment spans residues leucine 272 to isoleucine 292. Topologically, residues histidine 293 to tryptophan 403 are cytoplasmic. A disordered region spans residues glycine 349–phenylalanine 371. Serine 354 carries the post-translational modification Phosphoserine.

This sequence belongs to the G-protein coupled receptor 3 family. Expression is high in kidney, pancreas, and testis, medium in brain, heart, prostate, small intestine, and spleen, low in liver, placenta, skeletal muscle, colon, ovary, and thymus, and not detectable in lung and peripheral leukocyte. According to PubMed:10945465, highly expressed in most brain areas examined, with the highest levels observed in corpus callosum, caudate nucleus, putamen, substantia nigra, thalamus, hippocampus, and spinal cord as well as in dorsal root ganglia (DRG). Expressed in glia limitans, ependymal cells, astrocyte cell bodies, the perivascular region in astrocyte endfeet, but not in neurons. In the periphery, expression levels are relatively low, compared to the CNS, with the strongest expression detected in pancreas, testis, uterus, and stomach.

It is found in the cell membrane. The protein localises to the cytoplasmic vesicle membrane. Functionally, G-protein coupled receptor involved in the regulation of cell volume. The polypeptide is G-protein coupled receptor family C group 5 member B (GPRC5B) (Homo sapiens (Human)).